A 95-amino-acid polypeptide reads, in one-letter code: Co-chaperonin GroES (95 aa).

The protein belongs to the GroES chaperonin family. As to quaternary structure, heptamer of 7 subunits arranged in a ring. Interacts with the chaperonin GroEL.

It is found in the cytoplasm. Its function is as follows. Together with the chaperonin GroEL, plays an essential role in assisting protein folding. The GroEL-GroES system forms a nano-cage that allows encapsulation of the non-native substrate proteins and provides a physical environment optimized to promote and accelerate protein folding. GroES binds to the apical surface of the GroEL ring, thereby capping the opening of the GroEL channel. In Desulforapulum autotrophicum (strain ATCC 43914 / DSM 3382 / VKM B-1955 / HRM2) (Desulfobacterium autotrophicum), this protein is Co-chaperonin GroES.